The following is a 204-amino-acid chain: N-(5'-phosphoribosyl)anthranilate isomerase (204 aa).

It belongs to the TrpF family.

The catalysed reaction is N-(5-phospho-beta-D-ribosyl)anthranilate = 1-(2-carboxyphenylamino)-1-deoxy-D-ribulose 5-phosphate. Its pathway is amino-acid biosynthesis; L-tryptophan biosynthesis; L-tryptophan from chorismate: step 3/5. The polypeptide is N-(5'-phosphoribosyl)anthranilate isomerase (Bacillus cereus (strain B4264)).